A 493-amino-acid polypeptide reads, in one-letter code: Serine/threonine-protein kinase PBL34 (493 aa).

2 disordered regions span residues 1 to 42 (MGLD…EEEE) and 84 to 117 (SKSA…TPVI). Gly2 carries the N-myristoyl glycine lipid modification. Residues 12–37 (WKSEKPKETENKNHKKKNGDDNKSRN) show a composition bias toward basic and acidic residues. Positions 100–114 (SSTTTTSNAESSSST) are enriched in low complexity. Thr131 carries the phosphothreonine modification. Positions 142 to 428 (FRPESLLGEG…VEALKPLPHL (287 aa)) constitute a Protein kinase domain. ATP is bound by residues 148–156 (LGEGGFGCV) and Lys180. At Tyr225 the chain carries Phosphotyrosine. Asp275 functions as the Proton acceptor in the catalytic mechanism. Position 279 is a phosphoserine (Ser279). Thr306 is modified (phosphothreonine). A Phosphoserine modification is found at Ser309. Phosphothreonine is present on residues Thr310 and Thr315. The residue at position 323 (Tyr323) is a Phosphotyrosine. Residues 447 to 493 (KNGSGRSQGFGSRNGQHQPVFRTLSSPHGSSPYRHQIPSPKPKGATT) form a disordered region. Residues 450–475 (SGRSQGFGSRNGQHQPVFRTLSSPHG) are compositionally biased toward polar residues.

The protein belongs to the protein kinase superfamily. Ser/Thr protein kinase family. Interacts with the Xanthomonas campestris effector XopAC/AvrAC. Interacts with SD129. In terms of processing, phosphorylated by SD129 at Thr-306 and Thr-310 in response to the pathogen-associated molecular pattern (PAMP) 3-OH-C10:0, a medium-chain 3-hydroxy fatty acid.

Its subcellular location is the cell membrane. The enzyme catalyses L-seryl-[protein] + ATP = O-phospho-L-seryl-[protein] + ADP + H(+). It carries out the reaction L-threonyl-[protein] + ATP = O-phospho-L-threonyl-[protein] + ADP + H(+). In terms of biological role, involved in chitin-triggered immune signaling and is required for reactive oxygen species (ROS) production. Acts downstream of SD129 in defense signaling triggered by the pathogen-associated molecular pattern (PAMP) 3-OH-C10:0, a medium-chain 3-hydroxy fatty acid. This chain is Serine/threonine-protein kinase PBL34, found in Arabidopsis thaliana (Mouse-ear cress).